Here is a 389-residue protein sequence, read N- to C-terminus: Homoserine O-acetyltransferase (389 aa).

An AB hydrolase-1 domain is found at 63-371 (NAVLVLHALT…SSDYGHDGFL (309 aa)). Ser168 (nucleophile) is an active-site residue. Arg240 provides a ligand contact to substrate. Active-site residues include Asp334 and His367. Asp368 contacts substrate.

The protein belongs to the AB hydrolase superfamily. MetX family. As to quaternary structure, homodimer.

The protein localises to the cytoplasm. It catalyses the reaction L-homoserine + acetyl-CoA = O-acetyl-L-homoserine + CoA. It functions in the pathway amino-acid biosynthesis; L-methionine biosynthesis via de novo pathway; O-acetyl-L-homoserine from L-homoserine: step 1/1. Transfers an acetyl group from acetyl-CoA to L-homoserine, forming acetyl-L-homoserine. The polypeptide is Homoserine O-acetyltransferase (Clavibacter michiganensis subsp. michiganensis (strain NCPPB 382)).